Reading from the N-terminus, the 371-residue chain is 3-dehydroquinate synthase (371 aa).

NAD(+) contacts are provided by residues 114 to 118, 138 to 139, Lys151, Lys160, and 178 to 181; these read GVVGD, TT, and TLNT. The Zn(2+) site is built by Glu193, His258, and His275.

This sequence belongs to the sugar phosphate cyclases superfamily. Dehydroquinate synthase family. Co(2+) serves as cofactor. It depends on Zn(2+) as a cofactor. The cofactor is NAD(+).

It is found in the cytoplasm. The enzyme catalyses 7-phospho-2-dehydro-3-deoxy-D-arabino-heptonate = 3-dehydroquinate + phosphate. Its pathway is metabolic intermediate biosynthesis; chorismate biosynthesis; chorismate from D-erythrose 4-phosphate and phosphoenolpyruvate: step 2/7. Functionally, catalyzes the conversion of 3-deoxy-D-arabino-heptulosonate 7-phosphate (DAHP) to dehydroquinate (DHQ). The chain is 3-dehydroquinate synthase from Synechococcus sp. (strain CC9605).